An 896-amino-acid polypeptide reads, in one-letter code: Cytokine receptor common subunit beta (896 aa).

The signal sequence occupies residues 1 to 22 (MDQQMALTWGLCYMALVALCWG). Residues 23-441 (HGVTEAEETV…SEEYTWKTDW (419 aa)) lie on the Extracellular side of the membrane. Cys39 and Cys49 are disulfide-bonded. Asn62 carries an N-linked (GlcNAc...) asparagine glycan. Intrachain disulfides connect Cys77–Cys99 and Cys88–Cys94. The Fibronectin type-III 1 domain maps to 136–243 (PPLPKNVSIS…PEVHWDSQPG (108 aa)). Asn141 is a glycosylation site (N-linked (GlcNAc...) asparagine). Low complexity predominate over residues 220 to 233 (SPGSSLSGRPSRWS). Positions 220–243 (SPGSSLSGRPSRWSPEVHWDSQPG) are disordered. 2 disulfide bridges follow: Cys253–Cys263 and Cys292–Cys310. The Fibronectin type-III 2 domain maps to 343 to 439 (QMEPPTLNLT…KWSEEYTWKT (97 aa)). Asn350 carries N-linked (GlcNAc...) asparagine glycosylation. Residues 428–432 (WSKWS) carry the WSXWS motif motif. Residues 442 to 463 (VMPTLWIVLILVFLILTLLLIL) traverse the membrane as a helical segment. Residues 464-896 (RFGCVSVYRT…WDNSQSGKVC (433 aa)) are Cytoplasmic-facing. The Box 1 motif motif lies at 477–485 (WKEKIPNPS). Disordered stretches follow at residues 543 to 620 (EDPN…GGSL) and 658 to 725 (CGSS…TGPL). 2 stretches are compositionally biased toward polar residues: residues 555-571 (PDTT…QLPN) and 658-668 (CGSSLETSGSP). Positions 716–725 (PVLTLPTGPL) are enriched in low complexity. Residues Ser752 and Ser754 each carry the phosphoserine modification. Tyr765 bears the Phosphotyrosine mark. The segment at 771-810 (SVSQAAKSPPGHPAPPVASSPTVIPGEPREEVGPASPHPE) is disordered.

It belongs to the type I cytokine receptor family. Type 4 subfamily. In terms of assembly, heterodimer of an alpha and a beta subunit. The beta subunit is common to the IL3, IL5 and GM-CSF receptors. The signaling GM-CSF receptor complex is a dodecamer of two head-to-head hexamers of two alpha, two beta, and two ligand subunits. Interacts with TMEM102; this interaction occurs preferentially in the absence of CSF2. Interacts with FCER1G; this interaction is direct. Interacts with LYN. In terms of processing, may be phosphorylated by LYN.

It is found in the membrane. In terms of biological role, high affinity receptor for interleukin-3, interleukin-5 and granulocyte-macrophage colony-stimulating factor. The chain is Cytokine receptor common subunit beta (Csf2rb) from Mus musculus (Mouse).